The following is a 321-amino-acid chain: Glycerol-3-phosphate phosphatase (321 aa).

D34 acts as the Nucleophile in catalysis. Positions 34, 36, and 260 each coordinate Mg(2+). The active-site Proton donor is the D36.

Belongs to the HAD-like hydrolase superfamily. CbbY/CbbZ/Gph/YieH family. Homodimer. The cofactor is Mg(2+). Ubiquitously expressed with higher expression in testis, heart, skeletal muscle and islet tissue (at protein level).

It catalyses the reaction O-phospho-L-tyrosyl-[protein] + H2O = L-tyrosyl-[protein] + phosphate. The catalysed reaction is sn-glycerol 1-phosphate + H2O = glycerol + phosphate. The enzyme catalyses sn-glycerol 3-phosphate + H2O = glycerol + phosphate. Inhibited by orthovanadate, beryllium trifluoride, Ca(2+) and EDTA. Glycerol-3-phosphate phosphatase hydrolyzing glycerol-3-phosphate into glycerol. Thereby, regulates the cellular levels of glycerol-3-phosphate a metabolic intermediate of glucose, lipid and energy metabolism. Was also shown to have a 2-phosphoglycolate phosphatase activity and a tyrosine-protein phosphatase activity. However, their physiological relevance is unclear. In vitro, also has a phosphatase activity toward ADP, ATP, GDP and GTP. The chain is Glycerol-3-phosphate phosphatase from Mus musculus (Mouse).